The following is a 653-amino-acid chain: Sodium-dependent phosphate transporter 2 (653 aa).

Met-1 is a topological domain (extracellular). A helical transmembrane segment spans residues 2–22 (VLVEYLWMVIVGFIIAFILAF). Residues 23–46 (SVGANDVANSFGTAVGSGVVTLRQ) are Cytoplasmic-facing. The helical transmembrane segment at 47 to 67 (ACILASIFETTGSVLLGAKVG) threads the bilayer. The Extracellular portion of the chain corresponds to 68–86 (ETIRKGIIDVNLYNNTVDL). N-linked (GlcNAc...) asparagine glycosylation occurs at Asn-81. A helical membrane pass occupies residues 87–107 (LMAGEVSAMVGSAVWQLIASF). At 108-109 (LR) the chain is on the cytoplasmic side. A helical transmembrane segment spans residues 110 to 130 (LPISGTHCIVGATIGFSLVAI). The Extracellular segment spans residues 131 to 142 (GTHGVQWMQLVK). Residues 143 to 163 (IVASWFISPLLSGLMSGALFL) form a helical membrane-spanning segment. Over 164–187 (MIKFFILKKEDPVPNGLKALPVFY) the chain is Cytoplasmic. A helical membrane pass occupies residues 188 to 208 (AATIGINVFSILYTGAPLLGL). Topologically, residues 209–217 (ESFPVWATA) are extracellular. The chain crosses the membrane as a helical span at residues 218 to 238 (LLSIGIAIIFALIVWFFVCPW). The Cytoplasmic segment spans residues 239–483 (MKKKIASRLK…EDKEEKDKSE (245 aa)). The helical transmembrane segment at 484 to 504 (VHLLFHFLQILTACFGSFAHG) threads the bilayer. Over 505–532 (GNDVSNAIGPLVALWLIYEQGGVMQEAS) the chain is Extracellular. Residues 533–553 (TPVWLLLYGGVGICAGLWVWG) traverse the membrane as a helical segment. The Cytoplasmic segment spans residues 554–572 (RRVIQTMGKDLTPITPSSG). A helical membrane pass occupies residues 573–587 (FTIELASAFTVVVAS). The Extracellular portion of the chain corresponds to 588–594 (NIGLPIS). The helical transmembrane segment at 595–610 (TTHCKVGSVVAVGWIR) threads the bilayer. Topologically, residues 611-622 (SRKAVDWRLFRN) are cytoplasmic. A helical transmembrane segment spans residues 623–643 (IFLAWFVTVPVAGLFSAGVMA). The Extracellular segment spans residues 644-653 (ILQYGILPYV).

Belongs to the inorganic phosphate transporter (PiT) (TC 2.A.20) family. As to quaternary structure, homodimer.

Its subcellular location is the cell membrane. The protein localises to the apical cell membrane. The enzyme catalyses 2 Na(+)(out) + phosphate(out) = 2 Na(+)(in) + phosphate(in). In terms of biological role, sodium-phosphate symporter which preferentially transports the monovalent form of phosphate with a stoichiometry of two sodium ions per phosphate ion. The chain is Sodium-dependent phosphate transporter 2 (slc20a2) from Xenopus tropicalis (Western clawed frog).